Consider the following 668-residue polypeptide: Myb-like protein W (668 aa).

Disordered regions lie at residues 57–124 (LDQF…NESV), 246–357 (EKEK…EEEV), 403–432 (KPKS…TDKG), 497–546 (YTNT…NKER), 561–583 (SMGR…TTTS), and 631–668 (QCEE…DEII). Over residues 69–121 (NNNNNNNSNNNNNNNNNNNNNNNNNNNNNNNNNNNNNNNNNNYNNYNNNNNNN) the composition is skewed to low complexity. The segment covering 246-268 (EKEKRKKEREEREEREKQEKQEQ) has biased composition (basic and acidic residues). Positions 293-307 (NNKDNNHNGYYYYYD) are enriched in low complexity. Over residues 308–318 (NDNDNYNDGDD) the composition is skewed to acidic residues. The segment covering 319-335 (EKEKEKEKEKEKEKENE) has biased composition (basic and acidic residues). The 55-residue stretch at 344–398 (TSMVNSEEWTEEEVNKMNEIRGKLSTADYNYWDKVSAHVKSKTAEQCQRKYNSRF) folds into the Myb-like domain. Low complexity predominate over residues 501 to 542 (NNNNNNNNNNNNNNNNNNNNNNNNNNNNNNNNNNNNNNNNNN). Basic and acidic residues predominate over residues 632-641 (CEERKKKEDR). Residues 642–651 (DVDEDGEDDY) are compositionally biased toward acidic residues.

The sequence is that of Myb-like protein W (mybW) from Dictyostelium discoideum (Social amoeba).